A 302-amino-acid chain; its full sequence is Sulfate adenylyltransferase subunit 2 (302 aa).

This sequence belongs to the PAPS reductase family. CysD subfamily. In terms of assembly, heterodimer composed of CysD, the smaller subunit, and CysN.

It carries out the reaction sulfate + ATP + H(+) = adenosine 5'-phosphosulfate + diphosphate. It participates in sulfur metabolism; hydrogen sulfide biosynthesis; sulfite from sulfate: step 1/3. With CysN forms the ATP sulfurylase (ATPS) that catalyzes the adenylation of sulfate producing adenosine 5'-phosphosulfate (APS) and diphosphate, the first enzymatic step in sulfur assimilation pathway. APS synthesis involves the formation of a high-energy phosphoric-sulfuric acid anhydride bond driven by GTP hydrolysis by CysN coupled to ATP hydrolysis by CysD. In Bacteroides thetaiotaomicron (strain ATCC 29148 / DSM 2079 / JCM 5827 / CCUG 10774 / NCTC 10582 / VPI-5482 / E50), this protein is Sulfate adenylyltransferase subunit 2.